Reading from the N-terminus, the 104-residue chain is Alpha-amylase inhibitor HOE-467A (104 aa).

The N-terminal stretch at 1–30 (MRVRALRLAALVGAGAALALSPLAAGPASA) is a signal peptide. Disulfide bonds link Cys-41–Cys-57 and Cys-75–Cys-103.

Functionally, inhibits mammalian alpha-amylases specifically but has no action on plant and microbial alpha-amylases. Forms a tight stoichiometric 1:1 complex with alpha-amylase. The sequence is that of Alpha-amylase inhibitor HOE-467A from Streptomyces tendae.